The following is a 334-amino-acid chain: tRNA N6-adenosine threonylcarbamoyltransferase (334 aa).

Residues H112 and H116 each contribute to the Fe cation site. Residues 135–139, D168, G181, D185, and N274 each bind substrate; that span reads VVSGG. D303 serves as a coordination point for Fe cation.

The protein belongs to the KAE1 / TsaD family. Requires Fe(2+) as cofactor.

It localises to the cytoplasm. It carries out the reaction L-threonylcarbamoyladenylate + adenosine(37) in tRNA = N(6)-L-threonylcarbamoyladenosine(37) in tRNA + AMP + H(+). Its function is as follows. Required for the formation of a threonylcarbamoyl group on adenosine at position 37 (t(6)A37) in tRNAs that read codons beginning with adenine. Is involved in the transfer of the threonylcarbamoyl moiety of threonylcarbamoyl-AMP (TC-AMP) to the N6 group of A37, together with TsaE and TsaB. TsaD likely plays a direct catalytic role in this reaction. The chain is tRNA N6-adenosine threonylcarbamoyltransferase from Anaeromyxobacter dehalogenans (strain 2CP-C).